We begin with the raw amino-acid sequence, 726 residues long: Catalase-peroxidase (726 aa).

Positions 1–33 are disordered; sequence MSTSDDIHNTTATGKCPFHQGGHDQSAGAGTTT. Residues 105–226 constitute a cross-link (tryptophyl-tyrosyl-methioninium (Trp-Tyr) (with M-252)); sequence WHGAGTYRSI…LGATEMGLIY (122 aa). His106 serves as the catalytic Proton acceptor. Positions 226–252 form a cross-link, tryptophyl-tyrosyl-methioninium (Tyr-Met) (with W-105); sequence YVNPEGPDHSGEPLSAAAAIRATFGNM. His267 lines the heme b pocket.

The protein belongs to the peroxidase family. Peroxidase/catalase subfamily. Homodimer or homotetramer. Requires heme b as cofactor. In terms of processing, formation of the three residue Trp-Tyr-Met cross-link is important for the catalase, but not the peroxidase activity of the enzyme.

The enzyme catalyses H2O2 + AH2 = A + 2 H2O. It carries out the reaction 2 H2O2 = O2 + 2 H2O. Bifunctional enzyme with both catalase and broad-spectrum peroxidase activity. In Shigella boydii serotype 18 (strain CDC 3083-94 / BS512), this protein is Catalase-peroxidase.